The primary structure comprises 214 residues: UPF0758 protein (214 aa).

The MPN domain maps to 92–214; that stretch reads VLSSWQALLD…ELSFRAEGLL (123 aa). Positions 163, 165, and 176 each coordinate Zn(2+). The JAMM motif motif lies at 163 to 176; it reads HNHPSGDPTPSQAD.

This sequence belongs to the UPF0758 family.

This chain is UPF0758 protein, found in Rhodobacter capsulatus (Rhodopseudomonas capsulata).